The following is a 130-amino-acid chain: Con-Ins M1 (130 aa).

Residues 1–21 form the signal peptide; sequence MTTSSYFLLVALGLLLYVCQS. Intrachain disulfides connect Cys29/Cys107, Cys41/Cys110, Cys53/Cys123, and Cys109/Cys114. At Pro34 the chain carries 4-hydroxyproline; partial. The propeptide at 59 to 92 is c peptide; it reads AHGGTNDARATTGRALSLSKRRGFLSMLKRRGKR. Glu118 carries the 4-carboxyglutamate; partial modification. Residue Ser129 is modified to Serine amide.

The protein belongs to the insulin family. As to quaternary structure, heterodimer of A and B chains; disulfide-linked. Expressed by the venom gland.

It localises to the secreted. This venom insulin facilitates prey capture by rapidly inducing hypoglycemic shock. Intraperitoneal injection of this peptide into zebrafish lowers blood glucose with the same potency than human insulin. In vivo, when applied to water, this peptide reduces overall locomotor activity of zebrafish larvae, observed as a significant decrease in the percentage of time spent swimming and movement frequency. The protein is Con-Ins M1 of Conus marmoreus (Marble cone).